Here is a 370-residue protein sequence, read N- to C-terminus: Histidinol-phosphate aminotransferase 1 (370 aa).

Position 222 is an N6-(pyridoxal phosphate)lysine (lysine 222).

It belongs to the class-II pyridoxal-phosphate-dependent aminotransferase family. Histidinol-phosphate aminotransferase subfamily. In terms of assembly, homodimer. Pyridoxal 5'-phosphate is required as a cofactor.

The catalysed reaction is L-histidinol phosphate + 2-oxoglutarate = 3-(imidazol-4-yl)-2-oxopropyl phosphate + L-glutamate. It participates in amino-acid biosynthesis; L-histidine biosynthesis; L-histidine from 5-phospho-alpha-D-ribose 1-diphosphate: step 7/9. The chain is Histidinol-phosphate aminotransferase 1 from Bacillus cereus (strain ZK / E33L).